The primary structure comprises 655 residues: p-hydroxybenzoic acid efflux pump subunit AaeB (655 aa).

The next 11 membrane-spanning stretches (helical) occupy residues F13–L33, W38–P58, L69–I89, L93–V113, W121–L141, E152–I172, L370–V390, F407–P427, Q431–V451, M459–F479, and F482–L502.

The protein belongs to the aromatic acid exporter ArAE (TC 2.A.85) family.

Its subcellular location is the cell inner membrane. Forms an efflux pump with AaeA. Could function as a metabolic relief valve, allowing to eliminate certain compounds when they accumulate to high levels in the cell. The polypeptide is p-hydroxybenzoic acid efflux pump subunit AaeB (Shigella sonnei (strain Ss046)).